A 302-amino-acid polypeptide reads, in one-letter code: CRISPR-associated endonuclease Cas1 1 (302 aa).

3 residues coordinate Mn(2+): glutamate 159, histidine 219, and glutamate 234.

The protein belongs to the CRISPR-associated endonuclease Cas1 family. As to quaternary structure, homodimer, forms a heterotetramer with a Cas2 homodimer. Mg(2+) is required as a cofactor. The cofactor is Mn(2+).

Functionally, CRISPR (clustered regularly interspaced short palindromic repeat), is an adaptive immune system that provides protection against mobile genetic elements (viruses, transposable elements and conjugative plasmids). CRISPR clusters contain spacers, sequences complementary to antecedent mobile elements, and target invading nucleic acids. CRISPR clusters are transcribed and processed into CRISPR RNA (crRNA). Acts as a dsDNA endonuclease. Involved in the integration of spacer DNA into the CRISPR cassette. This Pyrobaculum aerophilum (strain ATCC 51768 / DSM 7523 / JCM 9630 / CIP 104966 / NBRC 100827 / IM2) protein is CRISPR-associated endonuclease Cas1 1.